Consider the following 660-residue polypeptide: tRNA 5-methylaminomethyl-2-thiouridine biosynthesis bifunctional protein MnmC (660 aa).

The tRNA (mnm(5)s(2)U34)-methyltransferase stretch occupies residues 1-242 (MTDRIVPATL…KRAMLVGEFA (242 aa)). Residues 266-660 (IGAGLAGCAV…VRALRHGRVA (395 aa)) are FAD-dependent cmnm(5)s(2)U34 oxidoreductase.

In the N-terminal section; belongs to the methyltransferase superfamily. tRNA (mnm(5)s(2)U34)-methyltransferase family. This sequence in the C-terminal section; belongs to the DAO family. It depends on FAD as a cofactor.

The protein resides in the cytoplasm. It carries out the reaction 5-aminomethyl-2-thiouridine(34) in tRNA + S-adenosyl-L-methionine = 5-methylaminomethyl-2-thiouridine(34) in tRNA + S-adenosyl-L-homocysteine + H(+). Functionally, catalyzes the last two steps in the biosynthesis of 5-methylaminomethyl-2-thiouridine (mnm(5)s(2)U) at the wobble position (U34) in tRNA. Catalyzes the FAD-dependent demodification of cmnm(5)s(2)U34 to nm(5)s(2)U34, followed by the transfer of a methyl group from S-adenosyl-L-methionine to nm(5)s(2)U34, to form mnm(5)s(2)U34. This Burkholderia pseudomallei (strain 1106a) protein is tRNA 5-methylaminomethyl-2-thiouridine biosynthesis bifunctional protein MnmC.